A 445-amino-acid chain; its full sequence is KICSTOR subunit 2 (445 aa).

Belongs to the KICS2 family. Part of the KICSTOR complex composed of KPTN, ITFG2, KICS2 and SZT2. SZT2 probably serves as a link between the other three proteins in the KICSTOR complex and may mediate the direct interaction with the GATOR complex via GATOR1. The KICSTOR complex interacts directly with the GATOR1 complex and most probably indirectly with the GATOR2 complex in an amino acid-independent manner.

Its subcellular location is the lysosome membrane. In terms of biological role, as part of the KICSTOR complex functions in the amino acid-sensing branch of the TORC1 signaling pathway. Recruits, in an amino acid-independent manner, the GATOR1 complex to the lysosomal membranes and allows its interaction with GATOR2 and the RAG GTPases. Functions upstream of the RAG GTPases and is required to negatively regulate mTORC1 signaling in absence of amino acids. In absence of the KICSTOR complex mTORC1 is constitutively localized to the lysosome and activated. The KICSTOR complex is also probably involved in the regulation of mTORC1 by glucose. This chain is KICSTOR subunit 2, found in Mus musculus (Mouse).